The chain runs to 325 residues: MKVFDYEDIQLIPAKCIVRSRTECDPTVVLGEHRFKLPVVPANMQTIINEEIAEKLAEDGYFYIMHRFEPERRMDFVKKMKDKGLISSISVGVKDDEYALIDQLAEENLTPDYITIDVAHGHAQSVIDMIHYIKEKLPAAFVIAGNVGTQEGVRELENAGADATKVGIGPGKVCITKIKTGFGTGGWQLSALRWCAKVARKPLIADGGIRTHGDIAKSIRFGATMVMIGSLFAGHIESPGETKVEDGVKYKEYFGSASQYQKGEAKNVEGKKIWIHQRGHLRDTLQAMREDLQSSISYAGGRDLEAIRKVDYVIVKNSIFNGDVL.

The active-site Thioimidate intermediate is Cys174. Residue Leu203–Val226 coordinates NADP(+).

The protein belongs to the IMPDH/GMPR family. GuaC type 2 subfamily.

It carries out the reaction IMP + NH4(+) + NADP(+) = GMP + NADPH + 2 H(+). Its function is as follows. Catalyzes the irreversible NADPH-dependent deamination of GMP to IMP. It functions in the conversion of nucleobase, nucleoside and nucleotide derivatives of G to A nucleotides, and in maintaining the intracellular balance of A and G nucleotides. The polypeptide is GMP reductase (Pediococcus pentosaceus (strain ATCC 25745 / CCUG 21536 / LMG 10740 / 183-1w)).